A 493-amino-acid polypeptide reads, in one-letter code: Phospholipid transfer protein (493 aa).

The first 17 residues, 1 to 17, serve as a signal peptide directing secretion; the sequence is MVLLWALFLALLAGAHA. N-linked (GlcNAc...) asparagine glycans are attached at residues Asn64, Asn91, Asn94, Asn117, and Asn143. Cys146 and Cys185 are disulfide-bonded. Asn245 and Asn398 each carry an N-linked (GlcNAc...) asparagine glycan.

This sequence belongs to the BPI/LBP/Plunc superfamily. BPI/LBP family. In terms of processing, glycosylation is necessary for secretion and its phospholipid transfer activity. In terms of tissue distribution, highest level expression in the lung, brain and heart with relatively low levels in the liver, skeletal muscle and testis and very low levels found in the spleen and kidney.

Its subcellular location is the secreted. The protein resides in the nucleus. It carries out the reaction a 1,2-diacyl-sn-glycero-3-phosphocholine(in) = a 1,2-diacyl-sn-glycero-3-phosphocholine(out). It catalyses the reaction a 1,2-diacyl-sn-glycero-3-phosphoethanolamine(in) = a 1,2-diacyl-sn-glycero-3-phosphoethanolamine(out). The catalysed reaction is a 1,2-diacyl-sn-glycerol(in) = a 1,2-diacyl-sn-glycerol(out). The enzyme catalyses a 1,2-diacyl-sn-glycero-3-phosphate(in) = a 1,2-diacyl-sn-glycero-3-phosphate(out). It carries out the reaction a sphingomyelin(in) = a sphingomyelin(out). It catalyses the reaction a 1,2-diacyl-sn-glycero-3-phospho-(1'-sn-glycerol)(in) = a 1,2-diacyl-sn-glycero-3-phospho-(1'-sn-glycerol)(out). The catalysed reaction is a 1,2-diacyl-sn-glycero-3-phospho-(1D-myo-inositol)(in) = a 1,2-diacyl-sn-glycero-3-phospho-(1D-myo-inositol)(out). The enzyme catalyses 1-hexadecanoyl-2-(5Z,8Z,11Z,14Z-eicosatetraenoyl)-sn-glycero-3-phosphoethanolamine(in) = 1-hexadecanoyl-2-(5Z,8Z,11Z,14Z-eicosatetraenoyl)-sn-glycero-3-phosphoethanolamine(out). It carries out the reaction N-(hexadecanoyl)-sphing-4-enine-1-phosphocholine(in) = N-(hexadecanoyl)-sphing-4-enine-1-phosphocholine(out). It catalyses the reaction 1,2-dihexadecanoyl-sn-glycero-3-phosphocholine(in) = 1,2-dihexadecanoyl-sn-glycero-3-phosphocholine(out). In terms of biological role, mediates the transfer of phospholipids and free cholesterol from triglyceride-rich lipoproteins (low density lipoproteins or LDL and very low density lipoproteins or VLDL) into high-density lipoproteins (HDL) as well as the exchange of phospholipids between triglyceride-rich lipoproteins themselves. Facilitates the transfer of a spectrum of different lipid molecules, including sphingomyelin, phosphatidylcholine, phosphatidylinositol, phosphatidylglycerol, and phosphatidyl ethanolamine. Plays an important role in HDL remodeling which involves modulating the size and composition of HDL. Also plays a key role in the uptake of cholesterol from peripheral cells and tissues that is subsequently transported to the liver for degradation and excretion. Two distinct forms of PLTP exist in plasma: an active form that can transfer phosphatidylcholine from phospholipid vesicles to HDL, and an inactive form that lacks this capability. The sequence is that of Phospholipid transfer protein (Pltp) from Mus musculus (Mouse).